A 262-amino-acid polypeptide reads, in one-letter code: Triosephosphate isomerase (262 aa).

9–11 (NWK) lines the substrate pocket. Histidine 99 (electrophile) is an active-site residue. Glutamate 171 functions as the Proton acceptor in the catalytic mechanism. Substrate-binding residues include glycine 177 and serine 216.

This sequence belongs to the triosephosphate isomerase family. Homodimer.

It localises to the cytoplasm. The catalysed reaction is D-glyceraldehyde 3-phosphate = dihydroxyacetone phosphate. The protein operates within carbohydrate biosynthesis; gluconeogenesis. Its pathway is carbohydrate degradation; glycolysis; D-glyceraldehyde 3-phosphate from glycerone phosphate: step 1/1. Its function is as follows. Involved in the gluconeogenesis. Catalyzes stereospecifically the conversion of dihydroxyacetone phosphate (DHAP) to D-glyceraldehyde-3-phosphate (G3P). The polypeptide is Triosephosphate isomerase (Blochmanniella floridana).